Here is a 181-residue protein sequence, read N- to C-terminus: Peptidyl-prolyl cis-trans isomerase H (181 aa).

The 164-residue stretch at phenylalanine 17 to glutamate 180 folds into the PPIase cyclophilin-type domain.

This sequence belongs to the cyclophilin-type PPIase family. PPIase H subfamily.

It is found in the nucleus. It catalyses the reaction [protein]-peptidylproline (omega=180) = [protein]-peptidylproline (omega=0). Functionally, PPIases accelerate the folding of proteins. It catalyzes the cis-trans isomerization of proline imidic peptide bonds in oligopeptides. This is Peptidyl-prolyl cis-trans isomerase H (cyp3) from Aspergillus fumigatus (strain ATCC MYA-4609 / CBS 101355 / FGSC A1100 / Af293) (Neosartorya fumigata).